Consider the following 320-residue polypeptide: MAAAAAAAAATEQQSSNGPVKKSMREKAVERRNVNKEHNSNFKAGYIPIDEDRLHKTGLRGRKGNLAICVIVLLFILAVINLLITLVIWAVIRIGPNGCDSMEFHESGLLRFKQVSDMGVIHPLYKSTVGGRRNENLVITGNNQPIVFQQGTTKLSVEKNKTSITSDIGMQFFDPRTQNILFSTDYETHEFHLPSGVKSLNVQKASTERITSNATSDLNIKVDGRAIVRGNEGVFIMGKTIEFHMGGNVELKAENSIILNGTVMVSPTRLPSSSSGDQSGGGDWVRYKLCMCADGTLFKVQVTGHNMGCQVADNPCGNTH.

Over residues 1-10 the composition is skewed to low complexity; it reads MAAAAAAAAA. The segment at 1–34 is disordered; sequence MAAAAAAAAATEQQSSNGPVKKSMREKAVERRNV. The Cytoplasmic segment spans residues 1-67; sequence MAAAAAAAAA…GLRGRKGNLA (67 aa). The span at 23–34 shows a compositional bias: basic and acidic residues; that stretch reads SMREKAVERRNV. A helical; Signal-anchor for type II membrane protein transmembrane segment spans residues 68 to 88; the sequence is ICVIVLLFILAVINLLITLVI. Residues 89 to 320 are Extracellular-facing; sequence WAVIRIGPNG…VADNPCGNTH (232 aa). N-linked (GlcNAc...) asparagine glycans are attached at residues N160, N213, and N260. 2 cysteine pairs are disulfide-bonded: C290-C316 and C292-C309.

The protein belongs to the sarcoglycan beta/delta/gamma/zeta family. As to quaternary structure, cross-link to form 2 major subcomplexes: one consisting of SGCB, SGCD and SGCG and the other consisting of SGCB and SGCD. The association between SGCB and SGCG is particularly strong while SGCA is loosely associated with the other sarcoglycans. In terms of processing, disulfide bonds are present.

The protein resides in the cell membrane. The protein localises to the sarcolemma. Its subcellular location is the cytoplasm. It is found in the cytoskeleton. Component of the sarcoglycan complex, a subcomplex of the dystrophin-glycoprotein complex which forms a link between the F-actin cytoskeleton and the extracellular matrix. The chain is Beta-sarcoglycan (SGCB) from Mesocricetus auratus (Golden hamster).